The sequence spans 126 residues: Histone H2B type 1-K (126 aa).

A compositionally biased stretch (low complexity) spans 1–12; it reads MPEPAKSAPAPK. Residues 1–36 are disordered; it reads MPEPAKSAPAPKKGSKKAVTKAQKKDGKKRKRSRKE. Residue Pro2 is modified to N-acetylproline. At Glu3 the chain carries ADP-ribosyl glutamic acid. The residue at position 6 (Lys6) is an N6-(2-hydroxyisobutyryl)lysine; alternate. The residue at position 6 (Lys6) is an N6-(beta-hydroxybutyryl)lysine; alternate. N6-acetyllysine; alternate is present on Lys6. Lys6 carries the post-translational modification N6-butyryllysine; alternate. Residue Lys6 is modified to N6-crotonyllysine; alternate. Residue Lys6 is modified to N6-lactoyllysine; alternate. A Glycyl lysine isopeptide (Lys-Gly) (interchain with G-Cter in SUMO2); alternate cross-link involves residue Lys6. Ser7 carries the ADP-ribosylserine modification. Lys12 is subject to N6-(beta-hydroxybutyryl)lysine; alternate. An N6-acetyllysine; alternate mark is found at Lys12 and Lys13. N6-crotonyllysine; alternate is present on residues Lys12 and Lys13. Residue Lys12 is modified to N6-lactoyllysine; alternate. Lys13 is modified (N6-(2-hydroxyisobutyryl)lysine; alternate). Phosphoserine; by STK4/MST1 is present on Ser15. An N6-acetyllysine; alternate mark is found at Lys16, Lys17, Lys21, and Lys24. N6-crotonyllysine; alternate is present on residues Lys16, Lys17, Lys21, and Lys24. N6-lactoyllysine; alternate occurs at positions 16, 17, 21, and 24. N6-(beta-hydroxybutyryl)lysine; alternate occurs at positions 17 and 21. At Lys17 the chain carries N6-glutaryllysine; alternate. N6-(2-hydroxyisobutyryl)lysine; alternate is present on residues Lys21 and Lys24. The residue at position 21 (Lys21) is an N6-butyryllysine; alternate. Lys21 participates in a covalent cross-link: Glycyl lysine isopeptide (Lys-Gly) (interchain with G-Cter in SUMO2); alternate. At Lys25 the chain carries N6-(2-hydroxyisobutyryl)lysine. An N6-(2-hydroxyisobutyryl)lysine; alternate modification is found at Lys35. Lys35 bears the N6-(beta-hydroxybutyryl)lysine; alternate mark. At Lys35 the chain carries N6-crotonyllysine; alternate. Residue Lys35 is modified to N6-glutaryllysine; alternate. Lys35 carries the N6-succinyllysine; alternate modification. Lys35 participates in a covalent cross-link: Glycyl lysine isopeptide (Lys-Gly) (interchain with G-Cter in ubiquitin); alternate. Glu36 carries the polyADP-ribosyl glutamic acid modification. Ser37 carries the post-translational modification Phosphoserine; by AMPK. N6-(2-hydroxyisobutyryl)lysine; alternate occurs at positions 44, 47, and 58. Lys44 carries the post-translational modification N6-lactoyllysine; alternate. An N6-glutaryllysine; alternate mark is found at Lys44 and Lys47. Lys47 is modified (N6-methyllysine; alternate). The residue at position 58 (Lys58) is an N6,N6-dimethyllysine; alternate. Residue Arg80 is modified to Dimethylated arginine. Position 86 is an N6-(2-hydroxyisobutyryl)lysine; alternate (Lys86). Lys86 carries the post-translational modification N6-(beta-hydroxybutyryl)lysine; alternate. Lys86 carries the post-translational modification N6-acetyllysine; alternate. At Lys86 the chain carries N6-lactoyllysine; alternate. Lys86 carries the N6,N6,N6-trimethyllysine; alternate modification. Omega-N-methylarginine is present on residues Arg87 and Arg93. Lys109 carries the post-translational modification N6-(2-hydroxyisobutyryl)lysine; alternate. An N6-lactoyllysine; alternate modification is found at Lys109. Lys109 is modified (N6-glutaryllysine; alternate). N6-methyllysine; alternate is present on Lys109. An O-linked (GlcNAc) serine glycan is attached at Ser113. Thr116 carries the phosphothreonine modification. 2 positions are modified to N6-(2-hydroxyisobutyryl)lysine; alternate: Lys117 and Lys121. 2 positions are modified to N6-(beta-hydroxybutyryl)lysine; alternate: Lys117 and Lys121. 2 positions are modified to N6-lactoyllysine; alternate: Lys117 and Lys121. N6-glutaryllysine; alternate is present on residues Lys117 and Lys121. Residues Lys117 and Lys121 each carry the N6-succinyllysine; alternate modification. An N6-malonyllysine; alternate modification is found at Lys117. Lys117 carries the N6-methylated lysine; alternate modification. A Glycyl lysine isopeptide (Lys-Gly) (interchain with G-Cter in ubiquitin); alternate cross-link involves residue Lys121.

The protein belongs to the histone H2B family. In terms of assembly, the nucleosome is a histone octamer containing two molecules each of H2A, H2B, H3 and H4 assembled in one H3-H4 heterotetramer and two H2A-H2B heterodimers. The octamer wraps approximately 147 bp of DNA. Post-translationally, monoubiquitination at Lys-35 (H2BK34Ub) by the MSL1/MSL2 dimer is required for histone H3 'Lys-4' (H3K4me) and 'Lys-79' (H3K79me) methylation and transcription activation at specific gene loci, such as HOXA9 and MEIS1 loci. Similarly, monoubiquitination at Lys-121 (H2BK120Ub) by the RNF20/40 complex gives a specific tag for epigenetic transcriptional activation and is also prerequisite for histone H3 'Lys-4' and 'Lys-79' methylation. It also functions cooperatively with the FACT dimer to stimulate elongation by RNA polymerase II. H2BK120Ub also acts as a regulator of mRNA splicing: deubiquitination by USP49 is required for efficient cotranscriptional splicing of a large set of exons. In terms of processing, phosphorylation at Ser-37 (H2BS36ph) by AMPK in response to stress promotes transcription. Phosphorylated on Ser-15 (H2BS14ph) by STK4/MST1 during apoptosis; which facilitates apoptotic chromatin condensation. Also phosphorylated on Ser-15 in response to DNA double strand breaks (DSBs), and in correlation with somatic hypermutation and immunoglobulin class-switch recombination. GlcNAcylation at Ser-113 promotes monoubiquitination of Lys-121. It fluctuates in response to extracellular glucose, and associates with transcribed genes. Post-translationally, ADP-ribosylated by PARP1 or PARP2 on Ser-7 (H2BS6ADPr) in response to DNA damage. H2BS6ADPr promotes recruitment of CHD1L. Mono-ADP-ribosylated on Glu-3 (H2BE2ADPr) by PARP3 in response to single-strand breaks. Poly ADP-ribosylation on Glu-36 (H2BE35ADPr) by PARP1 regulates adipogenesis: it inhibits phosphorylation at Ser-37 (H2BS36ph), thereby blocking expression of pro-adipogenetic genes. In terms of processing, crotonylation (Kcr) is specifically present in male germ cells and marks testis-specific genes in post-meiotic cells, including X-linked genes that escape sex chromosome inactivation in haploid cells. Crotonylation marks active promoters and enhancers and confers resistance to transcriptional repressors. It is also associated with post-meiotically activated genes on autosomes. Lactylated in macrophages by EP300/P300 by using lactoyl-CoA directly derived from endogenous or exogenous lactate, leading to stimulates gene transcription.

It is found in the nucleus. The protein resides in the chromosome. Its function is as follows. Core component of nucleosome. Nucleosomes wrap and compact DNA into chromatin, limiting DNA accessibility to the cellular machineries which require DNA as a template. Histones thereby play a central role in transcription regulation, DNA repair, DNA replication and chromosomal stability. DNA accessibility is regulated via a complex set of post-translational modifications of histones, also called histone code, and nucleosome remodeling. In terms of biological role, has broad antibacterial activity. May contribute to the formation of the functional antimicrobial barrier of the colonic epithelium, and to the bactericidal activity of amniotic fluid. The polypeptide is Histone H2B type 1-K (Homo sapiens (Human)).